A 206-amino-acid chain; its full sequence is Uridine kinase (206 aa).

11 to 18 (GGTGSGKS) is a binding site for ATP.

Belongs to the uridine kinase family.

Its subcellular location is the cytoplasm. The enzyme catalyses uridine + ATP = UMP + ADP + H(+). It carries out the reaction cytidine + ATP = CMP + ADP + H(+). The protein operates within pyrimidine metabolism; CTP biosynthesis via salvage pathway; CTP from cytidine: step 1/3. It participates in pyrimidine metabolism; UMP biosynthesis via salvage pathway; UMP from uridine: step 1/1. The protein is Uridine kinase of Clostridium botulinum (strain Okra / Type B1).